Consider the following 138-residue polypeptide: Phosphoribosyl-AMP cyclohydrolase (138 aa).

A Mg(2+)-binding site is contributed by aspartate 92. A Zn(2+)-binding site is contributed by cysteine 93. Mg(2+) contacts are provided by aspartate 94 and aspartate 96. The Zn(2+) site is built by cysteine 109 and cysteine 116.

This sequence belongs to the PRA-CH family. Homodimer. The cofactor is Mg(2+). Zn(2+) is required as a cofactor.

It is found in the cytoplasm. The enzyme catalyses 1-(5-phospho-beta-D-ribosyl)-5'-AMP + H2O = 1-(5-phospho-beta-D-ribosyl)-5-[(5-phospho-beta-D-ribosylamino)methylideneamino]imidazole-4-carboxamide. Its pathway is amino-acid biosynthesis; L-histidine biosynthesis; L-histidine from 5-phospho-alpha-D-ribose 1-diphosphate: step 3/9. Catalyzes the hydrolysis of the adenine ring of phosphoribosyl-AMP. The protein is Phosphoribosyl-AMP cyclohydrolase of Clavibacter sepedonicus (Clavibacter michiganensis subsp. sepedonicus).